Consider the following 104-residue polypeptide: L-rhamnose mutarotase (104 aa).

Position 18 (Tyr18) interacts with substrate. His22 functions as the Proton donor in the catalytic mechanism. Residues Tyr41 and 76–77 contribute to the substrate site; that span reads WW.

Belongs to the rhamnose mutarotase family. Homodimer.

It is found in the cytoplasm. It catalyses the reaction alpha-L-rhamnose = beta-L-rhamnose. It participates in carbohydrate metabolism; L-rhamnose metabolism. In terms of biological role, involved in the anomeric conversion of L-rhamnose. This chain is L-rhamnose mutarotase, found in Klebsiella pneumoniae (strain 342).